A 502-amino-acid polypeptide reads, in one-letter code: uncharacterized protein (502 aa).

The chain crosses the membrane as a helical span at residues 1–21 (MKIFLVILSVFFFNGCFGLAY). PLD phosphodiesterase domains lie at 162–189 (IKKR…GDNY) and 396–423 (TKHS…DPRS).

Belongs to the phospholipase D family. Cardiolipin synthase subfamily.

It is found in the cell membrane. This is an uncharacterized protein from Helicobacter pylori (strain J99 / ATCC 700824) (Campylobacter pylori J99).